The following is a 527-amino-acid chain: Zinc finger protein 35 (527 aa).

The globular domain stretch occupies residues 9–221 (MALAPWGPVK…NPKTQLGQKP (213 aa)). A disordered region spans residues 16 to 38 (PVKVKKEEEEEENFPGQASSQQV). Glycyl lysine isopeptide (Lys-Gly) (interchain with G-Cter in SUMO2) cross-links involve residues lysine 20, lysine 21, lysine 99, lysine 117, lysine 125, lysine 144, lysine 158, lysine 189, and lysine 214. 2 consecutive C2H2-type zinc fingers follow at residues 222-244 (FTCS…QRIH) and 250-272 (FECH…QRIH). Lysine 276 participates in a covalent cross-link: Glycyl lysine isopeptide (Lys-Gly) (interchain with G-Cter in SUMO2). 9 consecutive C2H2-type zinc fingers follow at residues 278–300 (YVCS…QKIH), 306–328 (FKCN…QKVH), 334–356 (YECN…QRIH), 362–384 (FACN…QRSH), 390–412 (YECK…QRIH), 418–440 (YDCS…QRIH), 446–468 (YVCN…QRIH), 474–496 (YTCN…QRTH), and 502–524 (YECE…HRTH).

This sequence belongs to the krueppel C2H2-type zinc-finger protein family.

It localises to the nucleus. In terms of biological role, may be involved in transcriptional regulation. Involved in cell differentiation and/or proliferation. The chain is Zinc finger protein 35 (ZNF35) from Homo sapiens (Human).